Here is a 141-residue protein sequence, read N- to C-terminus: Large ribosomal subunit protein uL22 (141 aa).

This sequence belongs to the universal ribosomal protein uL22 family. In terms of assembly, part of the 50S ribosomal subunit.

Functionally, this protein binds specifically to 23S rRNA; its binding is stimulated by other ribosomal proteins, e.g. L4, L17, and L20. It is important during the early stages of 50S assembly. It makes multiple contacts with different domains of the 23S rRNA in the assembled 50S subunit and ribosome. The globular domain of the protein is located near the polypeptide exit tunnel on the outside of the subunit, while an extended beta-hairpin is found that lines the wall of the exit tunnel in the center of the 70S ribosome. The chain is Large ribosomal subunit protein uL22 from Frankia alni (strain DSM 45986 / CECT 9034 / ACN14a).